The chain runs to 324 residues: Tetrachlorobenzoquinone reductase (324 aa).

The region spanning 5-107 (VSTIDMTVTQ…VPPANNFALV (103 aa)) is the FAD-binding FR-type domain. A 2Fe-2S ferredoxin-type domain is found at 238-324 (FTVVLARRSG…SKSPRLVLDI (87 aa)). 4 residues coordinate [2Fe-2S] cluster: Cys-273, Cys-278, Cys-281, and Cys-311.

It belongs to the PDR/VanB family. Homotrimer. FMN serves as cofactor. Requires [2Fe-2S] cluster as cofactor.

The catalysed reaction is 2,3,5,6-tetrachlorohydroquinone + NAD(+) + H(+) = 2,3,5,6-tetrachloro-1,4-benzoquinone + NADH. Its pathway is xenobiotic degradation; pentachlorophenol degradation. In vitro, activated by tetrachlorohydroquinone (TCHQ) at low concentrations and inhibited at high concentrations (above 200 uM). However, PcpD would only be stimulated by tetrachlorohydroquinone (TCHQ) under in vivo conditions due to the toxicity of tetrachlorohydroquinone (TCHQ). Competitively inhibited by pentachlorophenol (PCP) in a concentration-dependent manner. PcpD is regulated by tetrachlorohydroquinone (TCHQ) and pentachlorophenol (PCP) using a mechanism, which maintains tetrachlorobenzoquinone at a level that would neither significantly decrease the biodegradation of pentachlorophenol (PCP) nor cause cytotoxicity in cells. Functionally, involved in the degradation of the xenobiocide pentachlorophenol (PCP). Catalyzes the reduction of tetrachlorobenzoquinone (TCBQ) to yield tetrachlorohydroquinone (TCHQ). Also able to reduce 2,6-dichloroindophenol (DCIP). The chain is Tetrachlorobenzoquinone reductase from Sphingobium chlorophenolicum.